Reading from the N-terminus, the 89-residue chain is Small ribosomal subunit protein uS15 (89 aa).

This sequence belongs to the universal ribosomal protein uS15 family. Part of the 30S ribosomal subunit. Forms a bridge to the 50S subunit in the 70S ribosome, contacting the 23S rRNA.

Functionally, one of the primary rRNA binding proteins, it binds directly to 16S rRNA where it helps nucleate assembly of the platform of the 30S subunit by binding and bridging several RNA helices of the 16S rRNA. Forms an intersubunit bridge (bridge B4) with the 23S rRNA of the 50S subunit in the ribosome. The protein is Small ribosomal subunit protein uS15 of Rhodococcus erythropolis (strain PR4 / NBRC 100887).